We begin with the raw amino-acid sequence, 734 residues long: Photosystem I P700 chlorophyll a apoprotein A2 (734 aa).

The next 8 membrane-spanning stretches (helical) occupy residues 46 to 69, 135 to 158, 175 to 199, 273 to 291, 330 to 353, 369 to 395, 417 to 439, and 517 to 535; these read IFASHFGQLAIIFLWTSGNLFHVA, LYTGALFLLFLSTLSLIGGWLHLQ, LNHHLSGLFGVSSLAWTGHLVHVAI, IAHHHLAIAFIFLIAGHMY, IHFQLGLALASLGVITSLVAQHMY, AALYTHHQYIAGFIMTGAFAHGAIFFI, AIISHLSWASLFLGFHTLGLYVH, and FLVHHAIALGLHTTTLILV. [4Fe-4S] cluster contacts are provided by cysteine 559 and cysteine 568. 2 helical membrane passes run 575–596 and 643–665; these read AFYLAVFWMLNTIGWVTFYWHW and LSVWAWMFLFGHLVWATGFMFLI. 3 residues coordinate chlorophyll a: histidine 654, methionine 662, and tyrosine 670. Phylloquinone is bound at residue tryptophan 671. The helical transmembrane segment at 707 to 727 threads the bilayer; sequence LVGLAHFSVGYIFTYAAFLIA.

It belongs to the PsaA/PsaB family. As to quaternary structure, the PsaA/B heterodimer binds the P700 chlorophyll special pair and subsequent electron acceptors. PSI consists of a core antenna complex that captures photons, and an electron transfer chain that converts photonic excitation into a charge separation. The eukaryotic PSI reaction center is composed of at least 11 subunits. It depends on P700 is a chlorophyll a/chlorophyll a' dimer, A0 is one or more chlorophyll a, A1 is one or both phylloquinones and FX is a shared 4Fe-4S iron-sulfur center. as a cofactor.

It localises to the plastid. The protein resides in the chloroplast thylakoid membrane. It catalyses the reaction reduced [plastocyanin] + hnu + oxidized [2Fe-2S]-[ferredoxin] = oxidized [plastocyanin] + reduced [2Fe-2S]-[ferredoxin]. PsaA and PsaB bind P700, the primary electron donor of photosystem I (PSI), as well as the electron acceptors A0, A1 and FX. PSI is a plastocyanin-ferredoxin oxidoreductase, converting photonic excitation into a charge separation, which transfers an electron from the donor P700 chlorophyll pair to the spectroscopically characterized acceptors A0, A1, FX, FA and FB in turn. Oxidized P700 is reduced on the lumenal side of the thylakoid membrane by plastocyanin. This chain is Photosystem I P700 chlorophyll a apoprotein A2, found in Saccharum hybrid (Sugarcane).